The sequence spans 378 residues: N-acetyllactosaminide beta-1,3-N-acetylglucosaminyltransferase 4 (378 aa).

The Cytoplasmic portion of the chain corresponds to 1–28 (MLPPQPSAAHQGRGGRSGLLPKGPAMLC). Residues 29–49 (RLCWLVSYSLAVLLLGCLLFL) form a helical; Signal-anchor for type II membrane protein membrane-spanning segment. The Lumenal segment spans residues 50–378 (RKAAKPAGDP…KCAAGPIPQR (329 aa)). Positions 59-81 (PTAHQPFWAPPTPRHSRCPPNHT) are disordered. N-linked (GlcNAc...) asparagine glycosylation occurs at asparagine 192.

This sequence belongs to the glycosyltransferase 31 family. Mainly expressed in brain tissues such as whole brain, hippocampus, amygdala, cerebellum and caudate nucleus. Also expressed in colon, esophagus and kidney.

It is found in the golgi apparatus membrane. It catalyses the reaction a beta-D-galactosyl-(1-&gt;4)-N-acetyl-beta-D-glucosaminyl derivative + UDP-N-acetyl-alpha-D-glucosamine = an N-acetyl-beta-D-glucosaminyl-(1-&gt;3)-beta-D-galactosyl-(1-&gt;4)-N-acetyl-beta-D-glucosaminyl derivative + UDP + H(+). It functions in the pathway protein modification; protein glycosylation. Its function is as follows. Beta-1,3-N-acetylglucosaminyltransferase involved in the synthesis of poly-N-acetyllactosamine. Has activity for type 2 oligosaccharides. This is N-acetyllactosaminide beta-1,3-N-acetylglucosaminyltransferase 4 (B3GNT4) from Homo sapiens (Human).